Consider the following 193-residue polypeptide: dCTP deaminase (193 aa).

Residues 110 to 115 (RSSLAR), Asp128, 136 to 138 (VLE), Tyr171, Lys178, and Gln182 each bind dCTP. Glu138 (proton donor/acceptor) is an active-site residue. Residues 169–193 (RPYNRREDAKYRNQQGAVASRIDKD) are disordered.

The protein belongs to the dCTP deaminase family. In terms of assembly, homotrimer.

It carries out the reaction dCTP + H2O + H(+) = dUTP + NH4(+). Its pathway is pyrimidine metabolism; dUMP biosynthesis; dUMP from dCTP (dUTP route): step 1/2. Functionally, catalyzes the deamination of dCTP to dUTP. In Escherichia coli O1:K1 / APEC, this protein is dCTP deaminase.